The following is a 478-amino-acid chain: V-type proton ATPase subunit H (478 aa).

This sequence belongs to the V-ATPase H subunit family. As to quaternary structure, V-ATPase is a heteromultimeric enzyme composed of a peripheral catalytic V1 complex (components A to H) attached to an integral membrane V0 proton pore complex (components: a, c, c', c'', d, e, f and VOA1). Interacts with YND1.

It is found in the vacuole membrane. Its function is as follows. Subunit of the V1 complex of vacuolar(H+)-ATPase (V-ATPase), a multisubunit enzyme composed of a peripheral complex (V1) that hydrolyzes ATP and a membrane integral complex (V0) that translocates protons. V-ATPase is responsible for acidifying and maintaining the pH of intracellular compartments. This subunit is essential for activity, but not assembly, of the enzyme complex. This subunit is also required for silencing the ATPase activity of V-ATPase when V1 is detached from V0. The polypeptide is V-type proton ATPase subunit H (Saccharomyces cerevisiae (strain ATCC 204508 / S288c) (Baker's yeast)).